The primary structure comprises 66 residues: Large ribosomal subunit protein uL30 (66 aa).

The protein belongs to the universal ribosomal protein uL30 family. As to quaternary structure, part of the 50S ribosomal subunit.

The sequence is that of Large ribosomal subunit protein uL30 from Chelativorans sp. (strain BNC1).